The sequence spans 190 residues: dCTP deaminase (190 aa).

113–118 is a binding site for dCTP; it reads KSTYAR. Residue Glu139 is the Proton donor/acceptor of the active site. Positions 158, 172, 181, and 182 each coordinate dCTP.

The protein belongs to the dCTP deaminase family. As to quaternary structure, homotrimer.

The enzyme catalyses dCTP + H2O + H(+) = dUTP + NH4(+). Its pathway is pyrimidine metabolism; dUMP biosynthesis; dUMP from dCTP (dUTP route): step 1/2. Functionally, catalyzes the deamination of dCTP to dUTP. This chain is dCTP deaminase, found in Chlamydia trachomatis serovar A (strain ATCC VR-571B / DSM 19440 / HAR-13).